A 986-amino-acid chain; its full sequence is MFMSAKSPLLLLVDGHSLAFRAYYAFGLSKKGPLRTTAGIPTSVCFGFLNSLMQVMESQKPAAIAIAFDRREPTFRHEADGAYKSNRQETPEDFAEDLSYLQQLLEALNLQTITYAGYEADDILGTLACQGSDAGYQVKILSGDRDLFQLVSPEKNISVLYLTRNPFSSNTGYDELDWQGVVDKMGVTPAQIVDFKALCGDKSDCIPGINGIGEKTAIKLLAEYETLEKVYENLAQIKGALKTRLDNGKDDAMHSQMLARIVVDVPLPVTWEDLQLTGFSTDRLVPLLEKLELRTFIDKIQAFHRNFSDNQSPVPMGNEADNGEPKKTVKAKKSKEKVNPDDSQQLSLFDGVPVVNQEDGLITIQLPKQIQPQIITTIAQLEALVEELKKHTDADFPVAWDTETDSLDPLVANLVGIGCAWGQEPNQVAYIPLKHHQGEQLSLGIIKDLLGEILGNAIYPKVLQNAKFDRRVLAHHGIELGGVVLDTMLASYVLQPEETHNLTDLCRRYNLGLVALSYKDLGLKKDQTIADLPLETAGQYCGLDCYATYLLASKLQKELDQYPELKEILKEIEQPLEKILAAMEDRGIRIDCDYLQTLSQQLAENLLTIETAAYEAAGESFNLSSPKQLGTILFDKLGLDRKKSRKTKTGYSTDHATLEKLQGDHPIIDAILEHRTLAKLKSTYVDALPELVNGQTQRIHTDFNQAVTSTGRLSSSNPNLQNIPIRSDFSRQIRRAFLPQKDWLLVSADYSQIELRILAHLSQEPVLLQAYGDRQDVHGVTAKLLFGKEDITPAERNLGKTINFGVIYGMGAQRFARETGISAVEGREFIDRYHRTYAQVFDYLETMKLEAIAKGYVTTIVGRRRYFNFVTEALRQLRGKTVTELDLVDVKMNYNDAQLLRSAANAPIQGSSADIIKIAMVKLAKLLESYQTRMLLQVHDELIFEMPPEEWEELAPLIQNTMEQALTLSVPLVVEMHRGSNWMEAK.

Residues 1–303 (MFMSAKSPLL…RTFIDKIQAF (303 aa)) enclose the 5'-3' exonuclease domain. Positions 304–592 (HRNFSDNQSP…MEDRGIRIDC (289 aa)) constitute a 3'-5' exonuclease domain. The interval 308-327 (SDNQSPVPMGNEADNGEPKK) is disordered. Residues 593-986 (DYLQTLSQQL…HRGSNWMEAK (394 aa)) are polymerase.

It belongs to the DNA polymerase type-A family. As to quaternary structure, single-chain monomer with multiple functions.

The enzyme catalyses DNA(n) + a 2'-deoxyribonucleoside 5'-triphosphate = DNA(n+1) + diphosphate. In terms of biological role, in addition to polymerase activity, this DNA polymerase exhibits 3'-5' and 5'-3' exonuclease activity. This Synechocystis sp. (strain ATCC 27184 / PCC 6803 / Kazusa) protein is DNA polymerase I (polA).